We begin with the raw amino-acid sequence, 658 residues long: Glycogen debranching enzyme (658 aa).

D335 (nucleophile) is an active-site residue. The Proton donor role is filled by E370. Residues 457-468 (NDANGEGNRDGT) are compositionally biased toward basic and acidic residues. Residues 457-481 (NDANGEGNRDGTDSNFSNNHGTEGL) form a disordered region.

Belongs to the glycosyl hydrolase 13 family.

The enzyme catalyses Hydrolysis of (1-&gt;6)-alpha-D-glucosidic linkages to branches with degrees of polymerization of three or four glucose residues in limit dextrin.. It participates in glycan degradation; glycogen degradation. Its function is as follows. Removes maltotriose and maltotetraose chains that are attached by 1,6-alpha-linkage to the limit dextrin main chain, generating a debranched limit dextrin. This is Glycogen debranching enzyme from Pectobacterium atrosepticum (strain SCRI 1043 / ATCC BAA-672) (Erwinia carotovora subsp. atroseptica).